Here is a 320-residue protein sequence, read N- to C-terminus: Solute carrier family 25 member 33 (320 aa).

3 Solcar repeats span residues 9–118 (ENTL…AKEQ), 126–213 (NSNT…LKKC), and 231–315 (SGFF…IVYL). Transmembrane regions (helical) follow at residues 12–32 (LLHL…TCPL), 49–65 (VYYP…AGMV), 121–141 (GIFV…AAFV), 190–210 (LTAS…YESL), 233–253 (FFGL…IAYP), and 298–318 (QIPN…LLGE).

The protein belongs to the mitochondrial carrier (TC 2.A.29) family.

It localises to the mitochondrion inner membrane. The catalysed reaction is UTP(in) + UDP(out) = UTP(out) + UDP(in). It carries out the reaction dUTP(out) + UTP(in) = dUTP(in) + UTP(out). It catalyses the reaction 5-methyl-UTP(out) + UTP(in) = 5-methyl-UTP(in) + UTP(out). The enzyme catalyses 5-methyl-UDP(out) + UTP(in) = 5-methyl-UDP(in) + UTP(out). The catalysed reaction is UTP(in) + CTP(out) = UTP(out) + CTP(in). It carries out the reaction CDP(out) + UTP(in) = CDP(in) + UTP(out). It catalyses the reaction dCTP(out) + UTP(in) = dCTP(in) + UTP(out). The enzyme catalyses dCDP(out) + UTP(in) = dCDP(in) + UTP(out). The catalysed reaction is UTP(in) + GTP(out) = UTP(out) + GTP(in). It carries out the reaction UTP(in) + GDP(out) = UTP(out) + GDP(in). It catalyses the reaction dGTP(out) + UTP(in) = dGTP(in) + UTP(out). The enzyme catalyses dGDP(out) + UTP(in) = dGDP(in) + UTP(out). The catalysed reaction is ITP(out) + UTP(in) = ITP(in) + UTP(out). Mitochondrial transporter that imports/exports pyrimidine nucleotides into and from mitochondria. Selectively transports uridine, thymidine, guanosine, cytosine and inosine (deoxy)nucleoside di- and triphosphates by an antiport mechanism. May import (deoxy)nucleoside triphosphates in exchange for intramitochondrial (deoxy)nucleoside diphosphates, thus providing precursors necessary for de novo synthesis of mitochondrial DNA and RNA while exporting products of their catabolism. Participates in mitochondrial genome maintenance, regulation of mitochondrial membrane potential and mitochondrial respiration. Upon INS or IGF1 stimulation regulates cell growth and proliferation by controlling mitochondrial DNA replication and transcription, the ratio of mitochondria-to nuclear-encoded components of the electron transport chain resulting in control of mitochondrial ROS production. Participates in dendritic cell endocytosis and may associate with mitochondrial oxidative phosphorylation. The chain is Solute carrier family 25 member 33 (Slc25a33) from Mus musculus (Mouse).